Consider the following 212-residue polypeptide: Deoxyribose-phosphate aldolase (212 aa).

Aspartate 89 (proton donor/acceptor) is an active-site residue. The active-site Schiff-base intermediate with acetaldehyde is the lysine 151. Lysine 180 serves as the catalytic Proton donor/acceptor.

It belongs to the DeoC/FbaB aldolase family. DeoC type 1 subfamily.

The protein resides in the cytoplasm. It carries out the reaction 2-deoxy-D-ribose 5-phosphate = D-glyceraldehyde 3-phosphate + acetaldehyde. Its pathway is carbohydrate degradation; 2-deoxy-D-ribose 1-phosphate degradation; D-glyceraldehyde 3-phosphate and acetaldehyde from 2-deoxy-alpha-D-ribose 1-phosphate: step 2/2. Its function is as follows. Catalyzes a reversible aldol reaction between acetaldehyde and D-glyceraldehyde 3-phosphate to generate 2-deoxy-D-ribose 5-phosphate. In Clostridium botulinum (strain Kyoto / Type A2), this protein is Deoxyribose-phosphate aldolase.